A 532-amino-acid polypeptide reads, in one-letter code: MVSRLEHPAGGYKKVFESCEELAEPIPAHVSGKIPAWLSGSLLRMGPGLFEIGDEPFNHLFDGQALIHKFDLKDGRVTYHRKFIRTDAYVRAMTEKRVVITELGTAAYPDPCKNIFSRFFTYFQGTEVTDNCSVNIYPIGEDFYACTETNFITKVNPDTLETIKKVDLCNYLSVNGLTAHPHIEADGTVYNIGNCFGKNMSLAYNIVKIPPLQEEKSDPLAMSKVLVQFPSSERFKPSYVHSFGMTENHFVFVETPVKINLLKFLTSWSIRGSNYMDCFESNDRMGTWFHLAAKNPGKYIDHKFRTSAFNIFHHINCFEDQGFIVVDLCTWKGHEFVYNYLYLANLRQNWEEVKKAALRAPQPEVRRYVLPLDIHREEQGKNLVSLPYTTATAVMCSDGTVWLEPEVLFSGPRQAFEFPQINYSKFNGKDYTFAYGLGLNHFVPDRICKLNVKSKETWIWQEPDAYPSEPLFVQSPDAEDEDDGVLLSIVVKPGVSQRPAFLLILKATDLTEIARAEVDVLIPLTLHGIYKP.

A lipid anchor (S-palmitoyl cysteine; in membrane form) is attached at cysteine 112. The Fe cation site is built by histidine 180, histidine 241, and histidine 313. Cysteine 329 carries S-palmitoyl cysteine; in membrane form lipidation. Histidine 527 is a Fe cation binding site.

It belongs to the carotenoid oxygenase family. Requires Fe(2+) as cofactor. Post-translationally, palmitoylated. As to expression, predominantly expressed in brain. Expressed at a low level in the eye.

It is found in the cytoplasm. The protein localises to the cell membrane. The enzyme catalyses an all-trans-retinyl ester + H2O = 13-cis-retinol + a fatty acid + H(+). It carries out the reaction lutein = (3R,3'S)-zeaxanthin. Functionally, specifically generates 13-cis retinol, a stereoisomeric form of retinoic acid. Capable of catalyzing the isomerization of lutein to meso-zeaxanthin an eye-specific carotenoid. This chain is All-trans-retinyl ester 13-cis isomerohydrolase (rpe65b), found in Danio rerio (Zebrafish).